Consider the following 63-residue polypeptide: Large ribosomal subunit protein bL28 (63 aa).

The interval 1-20 (MSKRCAITGKGPMVGNNVSH) is disordered.

It belongs to the bacterial ribosomal protein bL28 family.

The polypeptide is Large ribosomal subunit protein bL28 (Campylobacter fetus subsp. fetus (strain 82-40)).